The chain runs to 395 residues: Acid ceramidase (395 aa).

The first 21 residues, 1–21, serve as a signal peptide directing secretion; it reads MPGRSCVALVLLAAAVSCAVA. C31 and C340 are disulfide-bonded. C143 acts as the Nucleophile in catalysis. N-linked (GlcNAc...) asparagine glycosylation is found at N173, N195, N259, N286, N342, and N348. Residues C388 and C392 are joined by a disulfide bond.

The protein belongs to the acid ceramidase family. Heterodimer; disulfide-linked. The heterodimer is composed of the disulfide-linked alpha and beta chains produced by autocatalytic cleavage of the precursor. Isoform 2: May interact with NR5A1 in the nucleus; the direct interaction would negatively regulate NR5A1 transcriptional activity. Post-translationally, N-glycosylated. In terms of processing, proteolytically cleaved into two chains alpha and beta that remain associated via a disulfide bond. Cleavage gives rise to a conformation change that activates the enzyme. The same catalytic Cys residue mediates the autoproteolytic cleavage and subsequent hydrolysis of lipid substrates. The beta chain may undergo an additional C-terminal processing. Broadly expressed with higher expression in heart.

The protein resides in the lysosome. Its subcellular location is the secreted. It is found in the nucleus. It localises to the cytoplasm. It carries out the reaction an N-acylsphing-4-enine + H2O = sphing-4-enine + a fatty acid. It catalyses the reaction a beta-D-glucosyl-(1&lt;-&gt;1')-N-acylsphing-4-enine + H2O = beta-D-glucosyl-(1&lt;-&gt;1)-sphing-4-enine + a fatty acid. The enzyme catalyses a globoside Gb3Cer + H2O = a lysoGb3 + a fatty acid. The catalysed reaction is a globoside Gb3Cer (d18:1(4E)) + H2O = a lysoGb3(d18:1(4E)) + a fatty acid. It carries out the reaction N-dodecanoylsphing-4-enine + H2O = dodecanoate + sphing-4-enine. It catalyses the reaction N-tetradecanoylsphing-4-enine + H2O = tetradecanoate + sphing-4-enine. The enzyme catalyses N-hexadecanoylsphing-4-enine + H2O = sphing-4-enine + hexadecanoate. The catalysed reaction is N-octadecanoylsphing-4-enine + H2O = sphing-4-enine + octadecanoate. It carries out the reaction N-dodecanoyl-(4R)-hydroxysphinganine + H2O = (4R)-hydroxysphinganine + dodecanoate. It catalyses the reaction N-(dodecanoyl)-sphinganine + H2O = dodecanoate + sphinganine. The enzyme catalyses N-(acetyl)-sphing-4-enine + H2O = sphing-4-enine + acetate. The catalysed reaction is N-(hexanoyl)sphing-4-enine + H2O = hexanoate + sphing-4-enine. It carries out the reaction N-octanoylsphing-4-enine + H2O = octanoate + sphing-4-enine. It catalyses the reaction N-(9Z-octadecenoyl)-sphing-4-enine + H2O = sphing-4-enine + (9Z)-octadecenoate. The enzyme catalyses N-dodecanoylethanolamine + H2O = dodecanoate + ethanolamine. The protein operates within lipid metabolism; sphingolipid metabolism. With respect to regulation, activated by Ca(2+), Mg(2+) and Na(+) cations. Inhibited by Zn(2+). Phosphatidylserine and phosphatidic acid stimulate while cardiolipin, phosphatidylcholine, lysophosphatidylcholine, phosphatidylethanolamine, phosphatidylinositol and sphingomyelin inhibit the reverse ceramide synthase activity. Phosphatidic acid, phosphatidylinositol and C16-ceramide inhibit the ceramidase/hydrolase activity. Its function is as follows. Lysosomal ceramidase that hydrolyzes sphingolipid ceramides into sphingosine and free fatty acids at acidic pH. Ceramides, sphingosine, and its phosphorylated form sphingosine-1-phosphate are bioactive lipids that mediate cellular signaling pathways regulating several biological processes including cell proliferation, apoptosis and differentiation. Has a higher catalytic efficiency towards C12-ceramides versus other ceramides. Also catalyzes the reverse reaction allowing the synthesis of ceramides from fatty acids and sphingosine. For the reverse synthetic reaction, the natural sphingosine D-erythro isomer is more efficiently utilized as a substrate compared to D-erythro-dihydrosphingosine and D-erythro-phytosphingosine, while the fatty acids with chain lengths of 12 or 14 carbons are the most efficiently used. Also has an N-acylethanolamine hydrolase activity. By regulating the levels of ceramides, sphingosine and sphingosine-1-phosphate in the epidermis, mediates the calcium-induced differentiation of epidermal keratinocytes. Also indirectly regulates tumor necrosis factor/TNF-induced apoptosis. By regulating the intracellular balance between ceramides and sphingosine, in adrenocortical cells, probably also acts as a regulator of steroidogenesis. May directly regulate steroidogenesis by binding the nuclear receptor NR5A1 and negatively regulating its transcriptional activity. The chain is Acid ceramidase from Homo sapiens (Human).